The sequence spans 1183 residues: MNYNPLHLLPLPPTALDPKPIPTSLTLDPFSDVLWVGASSGIVSALCSPLTLARNVHFPAHGCKIGGGGFSAQGVSAVREVRVTDRDVWTLTEGGIGGRKRGGAPKWIVSDVTRSLRTMSPNPTNSHELITGGSGSLLLANTARGEVVRSIENSSPVVKLAPLHRTVLAAGLSGQVTVLDPRTGFKAAQNISPVQAHTGGLSGADVQGNIVATWGWTHMQGHPLPDPLIRLYDVRALRPLPPISFSSGPAFVLLHPSSSSHIVVSSQQGMLQTIDMSLGPSATVFQQLDVSSYITSMALSSRGDYLAFGDGDGQLHVWTTNETGENAAVDENGSIVLPPFNGYDGVKPEWPDQVDPLPTIAWEESTPLNLVGMPYYNEALLSQFPSECYATSTSPLFNPPATIPQPVLSSMKMVDFVGYAPNPKELRGKRYVLRAVPGAEGRARGKGRRDSGPRFRSEKDKKGTYKDKEEIEEELNDGEVPKYYRKVEIKYSKFGIEDFDFEFYNRTNYSGLETDILNSYTNSLLQALHYTLPLRAIATAHICVDCKKEHCLLCEAGFLFRMLEDAKGRNCQASNFSRAFSATSQAYALGLMDENTNSKSTAPYGSLIQNFNRWLLSTFSTESIVDGETFHLRPFPQKTSGLDGLSMNDGPSAIDQVLGVKIKTTNTCRHCGFVSSRDSTLHVVDLVYPKKMNPRLSFSDILRSSLIRDSTTKAICSSCKAFAPLDSRRSLSPSSGHPLPPVLSVNAMVTNSDVYGFWKDKKDVKEKDGVRRFLPKRVTIREVGKLENGQEEGVKYSIRSMVVQIQESPDAVAHLVSFVKMPSKDGSSAWIMFNDFLVRPVSEDEVLSFPDQWKVPAVIILERENAEELLNLEVLPKELDREILFKDVSIAWNRKQDMIKHKILQREEMPKRGTLVAIDAEFVALQQEEMEFRSDGTKNILRPSHMSLARVSVLRGEGEMEGKPFIDDYIHTSEAVVDYLTEFSGIKAGDLDPNNSPHTLVPLKVAYKKLRLLVDLGCIFVGHGLSKDFRTINIFVPPEQVMDTVLIYTLPGSQRKLSLRFLAWYLLHQDIQTNSHDSIEDAHFALLLCKLWMDYASESEEAFEIVMEDIFAEGKKLAFKPPSSAGNMMAEQQLSPVSFPPLSNGDQTVARAVVKSRMATPPPPTKLGLPQWASQNSPSPLRR.

WD repeat units lie at residues 150–189 (SIEN…KAAQ) and 289–328 (DVSS…ENAA). The segment at 331–478 (ENGSIVLPPF…EEIEEELNDG (148 aa)) is linker. Residues 439–470 (AEGRARGKGRRDSGPRFRSEKDKKGTYKDKEE) form a disordered region. The segment covering 448 to 469 (RRDSGPRFRSEKDKKGTYKDKE) has biased composition (basic and acidic residues). One can recognise a USP domain in the interval 479–864 (EVPKYYRKVE…VPAVIILERE (386 aa)). Residues 916-1085 (VAIDAEFVAL…HDSIEDAHFA (170 aa)) enclose the Exonuclease domain. Residues aspartate 919, glutamate 921, aspartate 1028, and aspartate 1081 each coordinate a divalent metal cation. Residues 1155-1183 (KSRMATPPPPTKLGLPQWASQNSPSPLRR) form a disordered region. Residues 1172 to 1183 (WASQNSPSPLRR) show a composition bias toward polar residues.

The protein belongs to the peptidase C19 family. PAN2 subfamily. As to quaternary structure, forms a heterotrimer with an asymmetric homodimer of the regulatory subunit PAN3 to form the poly(A)-nuclease (PAN) deadenylation complex. It depends on a divalent metal cation as a cofactor.

It is found in the cytoplasm. It catalyses the reaction Exonucleolytic cleavage of poly(A) to 5'-AMP.. With respect to regulation, positively regulated by the regulatory subunit PAN3. In terms of biological role, catalytic subunit of the poly(A)-nuclease (PAN) deadenylation complex, one of two cytoplasmic mRNA deadenylases involved in mRNA turnover. PAN specifically shortens poly(A) tails of RNA and the activity is stimulated by poly(A)-binding protein PAB1. PAN deadenylation is followed by rapid degradation of the shortened mRNA tails by the CCR4-NOT complex. Deadenylated mRNAs are then degraded by two alternative mechanisms, namely exosome-mediated 3'-5' exonucleolytic degradation, or deadenylation-dependent mRNA decaping and subsequent 5'-3' exonucleolytic degradation by XRN1. May also be involved in post-transcriptional maturation of mRNA poly(A) tails. In Cryptococcus neoformans var. neoformans serotype D (strain B-3501A) (Filobasidiella neoformans), this protein is PAN2-PAN3 deadenylation complex catalytic subunit PAN2.